The sequence spans 310 residues: Ribonuclease Z (310 aa).

Zn(2+) contacts are provided by H63, H65, D67, H68, H141, D212, and H270. Residue D67 is the Proton acceptor of the active site.

It belongs to the RNase Z family. Homodimer. The cofactor is Zn(2+).

It carries out the reaction Endonucleolytic cleavage of RNA, removing extra 3' nucleotides from tRNA precursor, generating 3' termini of tRNAs. A 3'-hydroxy group is left at the tRNA terminus and a 5'-phosphoryl group is left at the trailer molecule.. Its function is as follows. Zinc phosphodiesterase, which displays some tRNA 3'-processing endonuclease activity. Probably involved in tRNA maturation, by removing a 3'-trailer from precursor tRNA. In Limosilactobacillus fermentum (strain NBRC 3956 / LMG 18251) (Lactobacillus fermentum), this protein is Ribonuclease Z.